The primary structure comprises 215 residues: Thymidylate kinase (215 aa).

G11–S18 contacts ATP.

It belongs to the thymidylate kinase family.

The enzyme catalyses dTMP + ATP = dTDP + ADP. In terms of biological role, phosphorylation of dTMP to form dTDP in both de novo and salvage pathways of dTTP synthesis. This Nitrosomonas europaea (strain ATCC 19718 / CIP 103999 / KCTC 2705 / NBRC 14298) protein is Thymidylate kinase.